The sequence spans 270 residues: Phospholysine phosphohistidine inorganic pyrophosphate phosphatase (270 aa).

Mg(2+) contacts are provided by D17 and S19. Substrate-binding positions include 17-19 (DIS), 54-55 (TN), and K189. D214 is a Mg(2+) binding site.

The protein belongs to the HAD-like hydrolase superfamily. In terms of assembly, homodimer. Requires Mg(2+) as cofactor. Detected in liver (at protein level).

Its subcellular location is the cytoplasm. The protein resides in the nucleus. It catalyses the reaction diphosphate + H2O = 2 phosphate + H(+). Its function is as follows. Phosphatase that hydrolyzes imidodiphosphate, 3-phosphohistidine and 6-phospholysine. Has broad substrate specificity and can also hydrolyze inorganic diphosphate, but with lower efficiency. The polypeptide is Phospholysine phosphohistidine inorganic pyrophosphate phosphatase (LHPP) (Bos taurus (Bovine)).